Reading from the N-terminus, the 606-residue chain is Leucine-rich repeat and immunoglobulin-like domain-containing nogo receptor-interacting protein 2 (606 aa).

A signal peptide spans 1 to 27 (MLHTAISCWQPFLGLAVVLIFMGSTIG). The LRRNT domain occupies 28 to 57 (CPARCECSAQNKSVSCHRRRLIAIPEGIPI). The Extracellular segment spans residues 28 to 545 (CPARCECSAQ…LDLKTILVST (518 aa)). N38 carries N-linked (GlcNAc...) asparagine glycosylation. 12 LRR repeats span residues 58 to 79 (ETKI…EFIS), 82 to 103 (LLEE…AFNN), 106 to 127 (NLRS…VFTG), 130 to 151 (NLTK…MFQD), 154 to 175 (NLKS…AFSG), 178 to 199 (SLEQ…ALSH), 202 to 223 (SLIS…AFKR), 226 to 247 (HLKH…NSLY), 250 to 271 (NLTS…AFKH), 274 to 295 (YLTH…MFSD), 298 to 319 (RLQE…SFQG), and 322 to 343 (FLRV…VFSS). N-linked (GlcNAc...) asparagine glycosylation is present at N130. N-linked (GlcNAc...) asparagine glycosylation occurs at N188. N-linked (GlcNAc...) asparagine glycosylation is present at N279. N327 is a glycosylation site (N-linked (GlcNAc...) asparagine). The 55-residue stretch at 355 to 409 (NPLACDCRLLWILQRQPTLQFGGQQPMCAGPDTIRERSFKDFHSTALSFYFTCKK) folds into the LRRCT domain. One can recognise an Ig-like C2-type domain in the interval 410 to 499 (PKIREKKLQH…GNDTFTASLT (90 aa)). C432 and C483 are oxidised to a cystine. Residues 546–566 (AMGCFTFLGVVLFCFLLLFVW) traverse the membrane as a helical segment. Residues 567–606 (SRGKGKHKNSIDLEYVPRKNNGAVVEGEVAGPRRFNMKMI) lie on the Cytoplasmic side of the membrane.

The protein resides in the membrane. The protein is Leucine-rich repeat and immunoglobulin-like domain-containing nogo receptor-interacting protein 2 (LINGO2) of Homo sapiens (Human).